A 447-amino-acid chain; its full sequence is UPF0210 protein lp_2507 (447 aa).

It belongs to the UPF0210 family. Homodimer.

The polypeptide is UPF0210 protein lp_2507 (Lactiplantibacillus plantarum (strain ATCC BAA-793 / NCIMB 8826 / WCFS1) (Lactobacillus plantarum)).